A 428-amino-acid polypeptide reads, in one-letter code: Citrate synthase (428 aa).

Active-site residues include His-265, His-306, and Asp-363.

This sequence belongs to the citrate synthase family. In terms of assembly, homohexamer.

The enzyme catalyses oxaloacetate + acetyl-CoA + H2O = citrate + CoA + H(+). Its pathway is carbohydrate metabolism; tricarboxylic acid cycle; isocitrate from oxaloacetate: step 1/2. With respect to regulation, allosterically inhibited by NADH. The polypeptide is Citrate synthase (gltA) (Pseudomonas aeruginosa (strain ATCC 15692 / DSM 22644 / CIP 104116 / JCM 14847 / LMG 12228 / 1C / PRS 101 / PAO1)).